The following is a 70-amino-acid chain: Chondroitin proteoglycan 9 (70 aa).

A signal peptide spans 1–19 (MNFWHLLLLAVLFFVTVFG). O-linked (Xyl...) (chondroitin sulfate) serine glycosylation is found at Ser25 and Ser27.

The polypeptide is Chondroitin proteoglycan 9 (cpg-9) (Caenorhabditis briggsae).